Here is a 166-residue protein sequence, read N- to C-terminus: Cytochrome c-type biogenesis protein CcmE (166 aa).

Topologically, residues 1-7 (MTRKQKR) are cytoplasmic. Residues 8-28 (LALIASGAVVVSLAVGLVMFA) traverse the membrane as a helical; Signal-anchor for type II membrane protein segment. Residues 29–166 (LRDNIVFFYS…QTAPQGAQAY (138 aa)) lie on the Periplasmic side of the membrane. Heme-binding residues include H122 and Y126. The segment at 139–166 (GVWQEEGKSEGKPSAIPAQTAPQGAQAY) is disordered.

It belongs to the CcmE/CycJ family.

It is found in the cell inner membrane. Functionally, heme chaperone required for the biogenesis of c-type cytochromes. Transiently binds heme delivered by CcmC and transfers the heme to apo-cytochromes in a process facilitated by CcmF and CcmH. The polypeptide is Cytochrome c-type biogenesis protein CcmE (Methylocella silvestris (strain DSM 15510 / CIP 108128 / LMG 27833 / NCIMB 13906 / BL2)).